The chain runs to 141 residues: Small ribosomal subunit protein bS6 (141 aa).

Positions 96-141 (VTGPSEMLKAEENRSERRERRERPEHADGAEGDDSNDSDNSDNADE) are disordered. Positions 103 to 124 (LKAEENRSERRERRERPEHADG) are enriched in basic and acidic residues. The segment covering 125–141 (AEGDDSNDSDNSDNADE) has biased composition (acidic residues).

The protein belongs to the bacterial ribosomal protein bS6 family.

Its function is as follows. Binds together with bS18 to 16S ribosomal RNA. The chain is Small ribosomal subunit protein bS6 from Pseudomonas entomophila (strain L48).